A 249-amino-acid chain; its full sequence is 5'-nucleotidase SurE (249 aa).

A divalent metal cation contacts are provided by Asp-8, Asp-9, Ser-39, and Asn-91.

It belongs to the SurE nucleotidase family. A divalent metal cation is required as a cofactor.

The protein resides in the cytoplasm. It catalyses the reaction a ribonucleoside 5'-phosphate + H2O = a ribonucleoside + phosphate. Functionally, nucleotidase that shows phosphatase activity on nucleoside 5'-monophosphates. The protein is 5'-nucleotidase SurE of Pseudomonas fluorescens (strain SBW25).